Consider the following 268-residue polypeptide: Thiazole synthase (268 aa).

Lysine 100 (schiff-base intermediate with DXP) is an active-site residue. Residues glycine 161, 187-188 (AG), and 209-210 (NT) contribute to the 1-deoxy-D-xylulose 5-phosphate site. Residues 248–268 (ATPSSPSEGMITGSPHSAANN) form a disordered region.

It belongs to the ThiG family. As to quaternary structure, homotetramer. Forms heterodimers with either ThiH or ThiS.

The protein resides in the cytoplasm. It carries out the reaction [ThiS sulfur-carrier protein]-C-terminal-Gly-aminoethanethioate + 2-iminoacetate + 1-deoxy-D-xylulose 5-phosphate = [ThiS sulfur-carrier protein]-C-terminal Gly-Gly + 2-[(2R,5Z)-2-carboxy-4-methylthiazol-5(2H)-ylidene]ethyl phosphate + 2 H2O + H(+). It functions in the pathway cofactor biosynthesis; thiamine diphosphate biosynthesis. Catalyzes the rearrangement of 1-deoxy-D-xylulose 5-phosphate (DXP) to produce the thiazole phosphate moiety of thiamine. Sulfur is provided by the thiocarboxylate moiety of the carrier protein ThiS. In vitro, sulfur can be provided by H(2)S. This chain is Thiazole synthase, found in Nitrosomonas eutropha (strain DSM 101675 / C91 / Nm57).